The following is a 79-amino-acid chain: Alpha-actitoxin-Ms11a-4 (79 aa).

Positions 1-23 (MKVLVAVLVFALLMCMFVDIAES) are cleaved as a signal peptide. Positions 24-46 (RRRDNPEYPSGLRYDEEMGVFKR) are excised as a propeptide. 3 disulfides stabilise this stretch: cysteine 47–cysteine 61, cysteine 54–cysteine 67, and cysteine 60–cysteine 76. A Tyrosine amide modification is found at tyrosine 78.

The protein localises to the secreted. It is found in the nematocyst. Functionally, alpha-toxins act on postsynaptic membranes, they bind to the nicotinic acetylcholine receptors (nAChR) and thus inhibit them. This toxin very weakly competes with alpha-bungarotoxin for binding to orthosteric sites on muscle-type T.carlifornicus (IC(50)=14.95 uM) and human alpha-7/CHRNA7 nAChRs (IC(50)&gt;45 uM). In Metridium senile (Brown sea anemone), this protein is Alpha-actitoxin-Ms11a-4.